Here is a 118-residue protein sequence, read N- to C-terminus: Thioredoxin H3 (118 aa).

Residue alanine 2 is modified to N-acetylalanine. Residues 2-113 enclose the Thioredoxin domain; that stretch reads AAEGEVIACH…IIANLEKHKT (112 aa). Catalysis depends on nucleophile residues cysteine 39 and cysteine 42. A disulfide bridge links cysteine 39 with cysteine 42.

The protein belongs to the thioredoxin family. Plant H-type subfamily. In terms of assembly, interacts with FBA5 and FBA8. Interacts with FBA6. Interacts with MDH1.

Its subcellular location is the cytoplasm. Thiol-disulfide oxidoreductase that possesses disulfide reductase and insulin disulfide bonds reducing activities. Heat shock causes oligomerization and formation of high molecular weight (HMW) complexes with concomitant functional switching from a disulfide reductase to chaperone. The sequence is that of Thioredoxin H3 (TRX3) from Arabidopsis thaliana (Mouse-ear cress).